The chain runs to 199 residues: FMN-dependent NADH:quinone oxidoreductase 2 (199 aa).

FMN is bound by residues serine 10, 16 to 18 (SVS), and 96 to 99 (MYNF).

Belongs to the azoreductase type 1 family. Homodimer. Requires FMN as cofactor.

It carries out the reaction 2 a quinone + NADH + H(+) = 2 a 1,4-benzosemiquinone + NAD(+). The catalysed reaction is N,N-dimethyl-1,4-phenylenediamine + anthranilate + 2 NAD(+) = 2-(4-dimethylaminophenyl)diazenylbenzoate + 2 NADH + 2 H(+). Quinone reductase that provides resistance to thiol-specific stress caused by electrophilic quinones. In terms of biological role, also exhibits azoreductase activity. Catalyzes the reductive cleavage of the azo bond in aromatic azo compounds to the corresponding amines. This chain is FMN-dependent NADH:quinone oxidoreductase 2, found in Pseudomonas putida (strain ATCC 47054 / DSM 6125 / CFBP 8728 / NCIMB 11950 / KT2440).